Reading from the N-terminus, the 158-residue chain is Troponin C, isoform 1 (158 aa).

At Ser-1 the chain carries N-acetylserine. EF-hand domains are found at residues Glu-15–Lys-50, Val-51–Glu-86, Ala-91–Arg-126, and Leu-127–Gly-158. Residues Asp-64, Asp-66, Ser-68, Gln-70, and Glu-75 each contribute to the Ca(2+) site. Ca(2+)-binding residues include Asp-140, Asp-142, Ser-144, Thr-146, and Glu-151.

This sequence belongs to the troponin C family.

Troponin is the central regulatory protein of striated muscle contraction. Tn consists of three components: Tn-I which is the inhibitor of actomyosin ATPase, Tn-T which contains the binding site for tropomyosin and Tn-C. The binding of calcium to Tn-C abolishes the inhibitory action of Tn on actin filaments. The polypeptide is Troponin C, isoform 1 (Balanus nubilus (Giant acorn barnacle)).